Consider the following 101-residue polypeptide: Small ribosomal subunit protein uS14 (101 aa).

Belongs to the universal ribosomal protein uS14 family. Part of the 30S ribosomal subunit. Contacts proteins S3 and S10.

Its function is as follows. Binds 16S rRNA, required for the assembly of 30S particles and may also be responsible for determining the conformation of the 16S rRNA at the A site. This chain is Small ribosomal subunit protein uS14, found in Pasteurella multocida (strain Pm70).